We begin with the raw amino-acid sequence, 293 residues long: Small ribosomal subunit biogenesis GTPase RsgA (293 aa).

The region spanning 63–223 is the CP-type G domain; it reads KNQLNRPPIA…VADTPGFSSL (161 aa). GTP is bound by residues 112-115 and 166-174; these read SKTD and GQSGVGKSS. Residues C247, C252, H254, and C260 each contribute to the Zn(2+) site.

The protein belongs to the TRAFAC class YlqF/YawG GTPase family. RsgA subfamily. In terms of assembly, monomer. Associates with 30S ribosomal subunit, binds 16S rRNA. Zn(2+) is required as a cofactor.

The protein localises to the cytoplasm. Its function is as follows. One of several proteins that assist in the late maturation steps of the functional core of the 30S ribosomal subunit. Helps release RbfA from mature subunits. May play a role in the assembly of ribosomal proteins into the subunit. Circularly permuted GTPase that catalyzes slow GTP hydrolysis, GTPase activity is stimulated by the 30S ribosomal subunit. The polypeptide is Small ribosomal subunit biogenesis GTPase RsgA (Shouchella clausii (strain KSM-K16) (Alkalihalobacillus clausii)).